The primary structure comprises 73 residues: uncharacterized protein (73 aa).

Residues 20-49 (NATYNKNLELEKRLAKIRNEIPNKSKLIAT) are a coiled coil.

This is an uncharacterized protein from Acheta domesticus (House cricket).